The chain runs to 279 residues: MNPYLILLKPRVIWLLILASLAGYLYSARQPNIAQAFSLLLVAFLSTGGAAAFNHYWERDIDAAMRRTAKRPLPAGLVEPRNALAYSLVLSALGIALGFLLLGPLPGLFVFLGWFFYAVVYTVILKKRTWLNILGGGFAGNATFLGGYALGAGTVDLHAVLISFAIYLWIPSHIWALAYKYRDDYRRAGVPMLPTVVGEKAAVAIISLLNLASAAYIMTLYLAFGGGLLGGALVAAGVVATIATGAYALATKTDEAMWKMYKASSPVLTLFLLALIANA.

A run of 9 helical transmembrane segments spans residues 5 to 25 (LILL…AGYL), 33 to 53 (IAQA…AAAF), 84 to 103 (LAYS…LLLG), 108 to 125 (LFVF…TVIL), 133 to 153 (ILGG…LGAG), 159 to 179 (AVLI…ALAY), 201 to 221 (AAVA…MTLY), 222 to 242 (LAFG…VATI), and 256 to 276 (AMWK…LALI).

It belongs to the UbiA prenyltransferase family. Protoheme IX farnesyltransferase subfamily.

The protein localises to the cell membrane. The enzyme catalyses heme b + (2E,6E)-farnesyl diphosphate + H2O = Fe(II)-heme o + diphosphate. It participates in porphyrin-containing compound metabolism; heme O biosynthesis; heme O from protoheme: step 1/1. In terms of biological role, converts heme B (protoheme IX) to heme O by substitution of the vinyl group on carbon 2 of heme B porphyrin ring with a hydroxyethyl farnesyl side group. This Pyrobaculum arsenaticum (strain DSM 13514 / JCM 11321 / PZ6) protein is Protoheme IX farnesyltransferase.